The following is a 374-amino-acid chain: Homeobox protein knotted-1-like 13 (374 aa).

Residues 214-242 (TGASPGEGTGATMSDGEDDQADSEANMYD) form a disordered region. Residues 270–290 (ELKHELKQGYKEKLIDIREEI) enclose the ELK domain. The homeobox; TALE-type DNA-binding region spans 291–354 (LRKRRAGKLP…NQRKRNWHSN (64 aa)). The segment at 347 to 374 (RKRNWHSNPSSSTSVKTKRKSNAGDNNS) is disordered.

The protein belongs to the TALE/KNOX homeobox family. In terms of tissue distribution, isoforms 1 and 2 are expressed in roots, stems, shoot meristem, leaf blades, leaf sheaths and flowers. Isoform 3 is expressed in stems, shoot meristem, rachis, leaf blades and leaf sheaths.

It localises to the nucleus. Isoform 3 acts as a transcription activator, but isoforms 1 and 2 do not. The protein is Homeobox protein knotted-1-like 13 (OSH45) of Oryza sativa subsp. japonica (Rice).